The primary structure comprises 393 residues: 1-deoxy-D-xylulose 5-phosphate reductoisomerase (393 aa).

NADPH contacts are provided by T10, G11, S12, I13, Q38, and N124. Residue K125 participates in 1-deoxy-D-xylulose 5-phosphate binding. Residue E126 participates in NADPH binding. Mn(2+) is bound at residue D150. S151, E152, S179, and H202 together coordinate 1-deoxy-D-xylulose 5-phosphate. Residue E152 participates in Mn(2+) binding. An NADPH-binding site is contributed by G208. Residues S215, N220, K221, and E224 each coordinate 1-deoxy-D-xylulose 5-phosphate. E224 provides a ligand contact to Mn(2+).

It belongs to the DXR family. Requires Mg(2+) as cofactor. It depends on Mn(2+) as a cofactor.

The enzyme catalyses 2-C-methyl-D-erythritol 4-phosphate + NADP(+) = 1-deoxy-D-xylulose 5-phosphate + NADPH + H(+). Its pathway is isoprenoid biosynthesis; isopentenyl diphosphate biosynthesis via DXP pathway; isopentenyl diphosphate from 1-deoxy-D-xylulose 5-phosphate: step 1/6. Its function is as follows. Catalyzes the NADPH-dependent rearrangement and reduction of 1-deoxy-D-xylulose-5-phosphate (DXP) to 2-C-methyl-D-erythritol 4-phosphate (MEP). This is 1-deoxy-D-xylulose 5-phosphate reductoisomerase from Ralstonia nicotianae (strain ATCC BAA-1114 / GMI1000) (Ralstonia solanacearum).